Here is a 784-residue protein sequence, read N- to C-terminus: Protein translocase subunit SecA 2 (784 aa).

Residues Gln94, Gly112 to Thr116, and Asp501 contribute to the ATP site.

This sequence belongs to the SecA family. Monomer and homodimer. Part of the essential Sec protein translocation apparatus which comprises SecA, SecYEG and auxiliary proteins SecDF. Other proteins may also be involved.

The protein resides in the cell membrane. It localises to the cytoplasm. It catalyses the reaction ATP + H2O + cellular proteinSide 1 = ADP + phosphate + cellular proteinSide 2.. In terms of biological role, part of the Sec protein translocase complex. Interacts with the SecYEG preprotein conducting channel. Has a central role in coupling the hydrolysis of ATP to the transfer of proteins into and across the cell membrane, serving as an ATP-driven molecular motor driving the stepwise translocation of polypeptide chains across the membrane. The polypeptide is Protein translocase subunit SecA 2 (Mycolicibacterium smegmatis (strain ATCC 700084 / mc(2)155) (Mycobacterium smegmatis)).